Consider the following 303-residue polypeptide: Putative F-box protein At5g62060 (303 aa).

In terms of domain architecture, F-box spans Lys-27 to Ile-74.

The polypeptide is Putative F-box protein At5g62060 (Arabidopsis thaliana (Mouse-ear cress)).